A 134-amino-acid chain; its full sequence is Profilin-2 (134 aa).

Cys13 and Cys118 form a disulfide bridge. Positions 84-100 (AVIRGKKGAGGITIKKT) match the Involved in PIP2 interaction motif. Thr114 bears the Phosphothreonine mark.

The protein belongs to the profilin family. As to quaternary structure, occurs in many kinds of cells as a complex with monomeric actin in a 1:1 ratio. Post-translationally, phosphorylated by MAP kinases.

The protein localises to the cytoplasm. It is found in the cytoskeleton. Binds to actin and affects the structure of the cytoskeleton. At high concentrations, profilin prevents the polymerization of actin, whereas it enhances it at low concentrations. The polypeptide is Profilin-2 (Olea europaea (Common olive)).